The sequence spans 140 residues: Methylglyoxal synthase (140 aa).

An MGS-like domain is found at 1 to 140; it reads MKIALIAHDR…HEGDRRPLAF (140 aa). Residues H8, K12, 34-37, and 54-55 each bind substrate; these read TGTT and SG. D60 functions as the Proton donor/acceptor in the catalytic mechanism. H87 contacts substrate.

The protein belongs to the methylglyoxal synthase family.

The catalysed reaction is dihydroxyacetone phosphate = methylglyoxal + phosphate. Catalyzes the formation of methylglyoxal from dihydroxyacetone phosphate. The chain is Methylglyoxal synthase from Enterococcus faecalis (strain ATCC 700802 / V583).